The sequence spans 577 residues: (E)-beta-farnesene synthase (577 aa).

Residues aspartate 327, aspartate 331, aspartate 474, serine 478, and glutamate 482 each coordinate Mg(2+). The short motif at 327-331 (DDTFD) is the DDXXD motif element.

It belongs to the terpene synthase family. It depends on Mg(2+) as a cofactor. Co(2+) serves as cofactor. The cofactor is Mn(2+). Expressed in flowers.

Its subcellular location is the cytoplasm. The catalysed reaction is (2E,6E)-farnesyl diphosphate = (E)-beta-farnesene + diphosphate. Its pathway is secondary metabolite biosynthesis; terpenoid biosynthesis. With respect to regulation, strongly inhibited by manganese at concentration higher than 20 uM. Functionally, sesquiterpene cyclase catalyzing the production of beta-farnesene from farnesyl diphosphate. Unable to use geranyl diphosphate as substrate. The polypeptide is (E)-beta-farnesene synthase (CASC125) (Artemisia annua (Sweet wormwood)).